The chain runs to 500 residues: Aspartyl/glutamyl-tRNA(Asn/Gln) amidotransferase subunit B (500 aa).

Belongs to the GatB/GatE family. GatB subfamily. In terms of assembly, heterotrimer of A, B and C subunits.

It carries out the reaction L-glutamyl-tRNA(Gln) + L-glutamine + ATP + H2O = L-glutaminyl-tRNA(Gln) + L-glutamate + ADP + phosphate + H(+). The catalysed reaction is L-aspartyl-tRNA(Asn) + L-glutamine + ATP + H2O = L-asparaginyl-tRNA(Asn) + L-glutamate + ADP + phosphate + 2 H(+). Its function is as follows. Allows the formation of correctly charged Asn-tRNA(Asn) or Gln-tRNA(Gln) through the transamidation of misacylated Asp-tRNA(Asn) or Glu-tRNA(Gln) in organisms which lack either or both of asparaginyl-tRNA or glutaminyl-tRNA synthetases. The reaction takes place in the presence of glutamine and ATP through an activated phospho-Asp-tRNA(Asn) or phospho-Glu-tRNA(Gln). This is Aspartyl/glutamyl-tRNA(Asn/Gln) amidotransferase subunit B from Thermosynechococcus vestitus (strain NIES-2133 / IAM M-273 / BP-1).